Consider the following 241-residue polypeptide: Terpene cyclase olcD (241 aa).

The next 7 membrane-spanning stretches (helical) occupy residues 19-39 (LSDI…FATI), 49-71 (WMPL…LYPP), 76-95 (ILGF…LRFA), 108-128 (YLPV…LALI), 137-157 (FYYG…SGLV), 166-186 (SYTI…GLFF), and 202-222 (LMRW…VQFW).

The protein belongs to the paxB family.

The protein localises to the membrane. Its pathway is secondary metabolite biosynthesis; terpenoid biosynthesis. Functionally, terpene cyclase; part of the gene cluster that mediates the biosynthesis of 15-deoxyoxalicine B. The first step of the pathway is the synthesis of nicotinyl-CoA from nicotinic acid by the nicotinic acid-CoA ligase olcI. Nicotinyl-CoA is then a substrate of polyketide synthase olcA to produce 4-hydroxy-6-(3-pyridinyl)-2H-pyran-2-one (HPPO) which is further prenylated by the polyprenyl transferase olcH to yield geranylgeranyl-HPPO. Geranylgeranyl pyrophosphate is provided by the cluster-specific geranylgeranyl pyrophosphate synthase olcC. The FAD-dependent monooxygenase olcE catalyzes the epoxidation of geranylgeranyl-HPPO and the terpene cyclase olcD catalyzes the cyclization of the terpenoid component, resulting in the formation of the tricyclic terpene moiety seen in predecaturin E. The cytochrome P450 monooxygenase then catalyzes the allylic oxidation of predecaturin E, which is followed by spirocylization with concomitant loss of one molecule of water to form decaturin E. Decaturin E is the substrate of the cytochrome P450 monooxygenase olcJ which hydroxylates it at the C-29 position to form decaturin F. The short-chain dehydrogenase/reductase olcF may catalyze the oxidation of decaturin F to generate the 29-hydroxyl-27-one intermediate, and subsequent hemiacetal formation probably leads to the formation of decaturin C. The dioxygenase olcK may be a peroxisomal enzyme that catalyzes the hydroxylation of decaturin C into decaturin A once decaturin C is shuttled into the peroxisome by the MFS transporter olcL. Finally the cytochrome P450 monooxygenase olcB catalyzes the oxidative rearrangement to yield 15-deoxyoxalicine B. In the absence of olcJ, decaturin E may be shunted to a pathway in which it is oxidized to a ketone, possibly by olcF, to form decaturin D, which undergoes further allylic oxidation to yield decaturin G. Moreover, in the absence of oclK or oclL, oclB can convert decaturin C into 15-deoxyoxalicine A. This chain is Terpene cyclase olcD, found in Penicillium canescens.